Reading from the N-terminus, the 137-residue chain is Basic phospholipase A2 DsM-S1 (137 aa).

Positions M1–G16 are cleaved as a signal peptide. 7 disulfides stabilise this stretch: C42–C131, C44–C60, C59–C111, C65–C137, C66–C104, C73–C97, and C91–C102. 3 residues coordinate Ca(2+): Y43, G45, and G47. The active site involves H63. D64 is a Ca(2+) binding site. The active site involves D105.

It belongs to the phospholipase A2 family. Group II subfamily. D49 sub-subfamily. Requires Ca(2+) as cofactor. As to expression, expressed by the venom gland.

The protein localises to the secreted. It catalyses the reaction a 1,2-diacyl-sn-glycero-3-phosphocholine + H2O = a 1-acyl-sn-glycero-3-phosphocholine + a fatty acid + H(+). Snake venom phospholipase A2 (PLA2) that is neurotoxic. PLA2 catalyzes the calcium-dependent hydrolysis of the 2-acyl groups in 3-sn-phosphoglycerides. The protein is Basic phospholipase A2 DsM-S1 of Daboia siamensis (Eastern Russel's viper).